Here is a 181-residue protein sequence, read N- to C-terminus: Oligoribonuclease (181 aa).

One can recognise an Exonuclease domain in the interval 8-171 (LIWVDLEMTG…VDIQESIAEL (164 aa)). Residue Tyr129 is part of the active site.

This sequence belongs to the oligoribonuclease family.

The protein resides in the cytoplasm. Functionally, 3'-to-5' exoribonuclease specific for small oligoribonucleotides. The protein is Oligoribonuclease of Shewanella loihica (strain ATCC BAA-1088 / PV-4).